Here is a 516-residue protein sequence, read N- to C-terminus: Lysine--tRNA ligase (516 aa).

Residues 1 to 23 (MTEPNRAQAAPASPTAELPAADE) form a disordered region. Mg(2+) is bound by residues Glu426 and Glu433.

Belongs to the class-II aminoacyl-tRNA synthetase family. In terms of assembly, homodimer. Mg(2+) is required as a cofactor.

It is found in the cytoplasm. It catalyses the reaction tRNA(Lys) + L-lysine + ATP = L-lysyl-tRNA(Lys) + AMP + diphosphate. The sequence is that of Lysine--tRNA ligase from Cupriavidus pinatubonensis (strain JMP 134 / LMG 1197) (Cupriavidus necator (strain JMP 134)).